Consider the following 577-residue polypeptide: MAQRIFTLIFLLWTAVGTPQVAASSFGQKLFGNSTTSRFLPVDGAFAFEFQQQGNQLNLRWDIHPDYYLYRAQIKIEGNGATLGKVELPQGESHNDEFFGQVFILRDRLALAVPIEQAESGATVKVTYQGCADAGFCYPPETRTVPLSQVLATANTDSPINTLSGQTAPPQTTPMPFSPWWALLIGIGVAFTPCVLPMYPLIASLVLGRKEQLTPRRTLLLSMTYVQGMALTYTLLGLIVAAAGLRFQAALQHPYILIGLSVMFIALALSMFGLYTLQLPSSVQTRLTEWSNRQQGGSVTGVFCMGALAGLICSPCTTAPLSAILLYIAQSGNMLAGGGTLYLYALGMGLPLILVTLFGNKLLPRSGPWMQYVKEAFGFIILALPVFLLERILGEAWGIRLWSALGIAFFGWALMLTLSSKKGWMRGVQLLLLAGVVISAKPLQDWVFPPTGTAQTHTSALNFAPVANIADLNSALAKSPQPVMLDLYADWCVACKEFEKYTFSDPAVQNHLSRITLLQADVTANREEQNALLKKLQVLGLPTIVFFDTQGKEIPGSRVTGFMNAEQFQAHLQKFSP.

An N-terminal signal peptide occupies residues 1–23 (MAQRIFTLIFLLWTAVGTPQVAA). 2 disulfide bridges follow: cysteine 131–cysteine 137 and cysteine 194–cysteine 316. Helical transmembrane passes span 182-202 (ALLI…YPLI), 225-245 (YVQG…AAGL), 255-275 (YILI…FGLY), 308-328 (LAGL…LLYI), 338-358 (GGTL…VTLF), 369-389 (WMQY…VFLL), and 396-416 (AWGI…ALML). Residues 437 to 577 (VISAKPLQDW…FQAHLQKFSP (141 aa)) enclose the Thioredoxin domain. Cysteine 492 and cysteine 495 are disulfide-bonded.

The protein belongs to the thioredoxin family. DsbD subfamily.

Its subcellular location is the cell inner membrane. It catalyses the reaction [protein]-dithiol + NAD(+) = [protein]-disulfide + NADH + H(+). The enzyme catalyses [protein]-dithiol + NADP(+) = [protein]-disulfide + NADPH + H(+). Functionally, required to facilitate the formation of correct disulfide bonds in some periplasmic proteins and for the assembly of the periplasmic c-type cytochromes. Acts by transferring electrons from cytoplasmic thioredoxin to the periplasm. This transfer involves a cascade of disulfide bond formation and reduction steps. In Pectobacterium atrosepticum (strain SCRI 1043 / ATCC BAA-672) (Erwinia carotovora subsp. atroseptica), this protein is Thiol:disulfide interchange protein DsbD.